The following is a 108-amino-acid chain: Nucleoid-associated protein GWCH70_0020 (108 aa).

Positions 1–34 are disordered; sequence MMRGGMGNMQKMMKQMQKMQKEMQKAQEQLAEKT. Low complexity predominate over residues 9–18; sequence MQKMMKQMQK. The segment covering 19-34 has biased composition (basic and acidic residues); the sequence is MQKEMQKAQEQLAEKT.

Belongs to the YbaB/EbfC family. In terms of assembly, homodimer.

The protein resides in the cytoplasm. It is found in the nucleoid. Binds to DNA and alters its conformation. May be involved in regulation of gene expression, nucleoid organization and DNA protection. This is Nucleoid-associated protein GWCH70_0020 from Geobacillus sp. (strain WCH70).